Consider the following 175-residue polypeptide: Sec-independent protein translocase protein TatB (175 aa).

A helical transmembrane segment spans residues 1–21; it reads MLDLGLSKMALIGVVALVVLG. Positions 94–115 are enriched in low complexity; that stretch reads SAVSPGGSAAADAPDGPSAASG. 2 disordered regions span residues 94-118 and 153-175; these read SAVS…GEPS and VQSG…ARFL. Over residues 160–175 the composition is skewed to basic residues; the sequence is VARHRPASLRRPARFL.

Belongs to the TatB family. As to quaternary structure, the Tat system comprises two distinct complexes: a TatABC complex, containing multiple copies of TatA, TatB and TatC subunits, and a separate TatA complex, containing only TatA subunits. Substrates initially bind to the TatABC complex, which probably triggers association of the separate TatA complex to form the active translocon.

It localises to the cell inner membrane. Functionally, part of the twin-arginine translocation (Tat) system that transports large folded proteins containing a characteristic twin-arginine motif in their signal peptide across membranes. Together with TatC, TatB is part of a receptor directly interacting with Tat signal peptides. TatB may form an oligomeric binding site that transiently accommodates folded Tat precursor proteins before their translocation. The sequence is that of Sec-independent protein translocase protein TatB from Burkholderia pseudomallei (strain 1106a).